The sequence spans 458 residues: MLGAVKMEGHEPSDWSSYYAEPEGYSSVSNMNASLGMNGMNTYMSMSAAAMGSGSGNMSAGSMNMSSYVGAGMSPSLAGMSPGAGAMAGMSGSAGAAGVAGMGPHLSPSLSPLGGQAAGAMGGLAPYANMNSMSPMYGQAGLSRARDPKTYRRSYTHAKPPYSYISLITMAIQQSPNKMLTLSEIYQWIMDLFPFYRQNQQRWQNSIRHSLSFNDFLKVPRAPDKPGKGSFWTLHPDSGNMFENGCYLRRQKRFKCENELALKEAAGAGSGGGKKTAPGTQASQVQLGEAAGSASETPAGTESPHSSASPCQEHKRGGLSELKGTPASALSPPEPAPSPGQQQQAAAHLLGPPHHPGLPPEAHLKPEHHYAFNHPFSINNLMSSEQQHHHSHHHHQPHKMDLKTYEQVMHYPGGYGSPMPGSLAMGPVTNKAGLDASPLAADTSYYQGVYSRPIMNSS.

Residues 14–93 form a transactivation domain 1 region; the sequence is DWSSYYAEPE…AGAMAGMSGS (80 aa). The short motif at 106–113 is the Nuclear localization signal element; the sequence is LSPSLSPL. T156 is subject to Phosphothreonine; by PKB/AKT1. Positions 159 to 252 form a DNA-binding region, fork-head; it reads KPPYSYISLI…ENGCYLRRQK (94 aa). Phosphoserine occurs at positions 212 and 283. The interval 286–365 is disordered; the sequence is QLGEAAGSAS…PGLPPEAHLK (80 aa). The span at 294 to 310 shows a compositional bias: polar residues; the sequence is ASETPAGTESPHSSASP. T301 bears the Phosphothreonine mark. Residues S303, S306, S307, and S309 each carry the phosphoserine modification. The segment covering 339 to 352 has biased composition (low complexity); the sequence is PGQQQQAAAHLLGP. Residues 361-458 form a transactivation domain 2 region; that stretch reads EAHLKPEHHY…VYSRPIMNSS (98 aa). S437 and S458 each carry phosphoserine.

In terms of assembly, binds DNA as a monomer. Binds TLE1. Interacts with FOXA1 and FOXA3. Interacts with PRKDC. Interacts with AKT1. Interacts with TET1; this interaction may recruit TET1 to specific genomic loci to mediate their demethylation. Post-translationally, phosphorylation on Thr-156 abolishes binding to target promoters and subsequent transcription activation upon insulin stimulation. Liver.

The protein resides in the nucleus. The protein localises to the cytoplasm. Transcription factor that is involved in embryonic development, establishment of tissue-specific gene expression and regulation of gene expression in differentiated tissues. Is thought to act as a 'pioneer' factor opening the compacted chromatin for other proteins through interactions with nucleosomal core histones and thereby replacing linker histones at target enhancer and/or promoter sites. Binds DNA with the consensus sequence 5'-[AC]A[AT]T[AG]TT[GT][AG][CT]T[CT]-3'. In embryonic development is required for notochord formation. Involved in the development of multiple endoderm-derived organ systems such as the liver, pancreas and lungs; FOXA1 and FOXA2 seem to have at least in part redundant roles. Originally described as a transcription activator for a number of liver genes such as AFP, albumin, tyrosine aminotransferase, PEPCK, etc. Interacts with the cis-acting regulatory regions of these genes. Involved in glucose homeostasis; regulates the expression of genes important for glucose sensing in pancreatic beta-cells and glucose homeostasis. Involved in regulation of fat metabolism. Acts synergistically with ONECUT1 to activate transcription of female-specific CYP2C12; the function is inhibited by growth hormone-activated STAT5B. Acts synergistically with HNF4A to activate transcription of APOA1. The protein is Hepatocyte nuclear factor 3-beta (Foxa2) of Rattus norvegicus (Rat).